Reading from the N-terminus, the 449-residue chain is Capsid protein (449 aa).

The segment at 1-43 (MARRARRPRGRFYAFRRGRWHHLKRLRRRYKFRHRRRQRYRRR) is DNA-binding. The tract at residues 6–47 (RRPRGRFYAFRRGRWHHLKRLRRRYKFRHRRRQRYRRRAFRK) is nuclear localization signals.

Belongs to the gyrovirus capsid protein family. As to quaternary structure, homomultimer (Potential). Interacts with Rep; this interaction relocates Rep into the nucleus.

Its subcellular location is the host nucleus. It localises to the virion. In terms of biological role, self-assembles to form the virion icosahedral capsid with a T=1 symmetry. This very small capsid (25 nm in diameter) allows the virus to be very stable in the environment and resistant to some disinfectants, including detergents. Essential for the initial attachment to host receptors. After attachment, the virus is endocytosed and traffics to the nucleus. The capsid protein binds and transports the viral genome and Rep across the nuclear envelope. The protein is Capsid protein (VP1) of Gallus gallus (Chicken).